Reading from the N-terminus, the 298-residue chain is Dihydrodipicolinate reductase-like protein CRR1, chloroplastic (298 aa).

A chloroplast-targeting transit peptide spans 1-25; sequence MAAVNCHFFQLSRHLKPSRPSFSCS. NAD(+) is bound at residue 160 to 163; the sequence is APTL.

It belongs to the DapB family. As to expression, expressed specifically in leaves.

The protein resides in the plastid. Its subcellular location is the chloroplast stroma. In terms of biological role, dihydrodipicolinate reductase (DHPR)-like protein that may not function as DHPR in lysine biosynthesis. Required for both formation and activity of the chloroplast NAD(P)H dehydrogenase (NDH) complex of the photosynthetic electron transport chain. May function in assembly or stabilization of the NDH complex. The chain is Dihydrodipicolinate reductase-like protein CRR1, chloroplastic from Arabidopsis thaliana (Mouse-ear cress).